Here is a 2400-residue protein sequence, read N- to C-terminus: Retinitis pigmentosa 1-like 1 protein (2400 aa).

Doublecortin domains are found at residues 34 to 118 (KKIT…GPGR) and 152 to 231 (RRIL…PAMK). Disordered stretches follow at residues 104–152 (CSDK…KTPR), 230–310 (MKNA…DDMK), 444–1064 (GRER…DREA), 1188–1251 (AMTE…GDLE), 1275–1501 (EAER…GAAE), and 1697–2400 (RGEH…DLDF). Residues 242–251 (SGLTSRNKNG) are compositionally biased toward polar residues. The span at 277–287 (RPGPSNPPVGP) shows a compositional bias: pro residues. Polar residues predominate over residues 450 to 460 (QDSASPASSTG). Low complexity-rich tracts occupy residues 530–543 (GASS…GSHE) and 573–584 (DPASPALSLSSL). Positions 591-601 (AETQGQGTEQA) are enriched in polar residues. 2 stretches are compositionally biased toward low complexity: residues 625 to 637 (SSTP…SQQG) and 645 to 654 (ASAMSSPSSP). Basic residues predominate over residues 661-670 (PRGHPRHSHY). Polar residues-rich tracts occupy residues 711-740 (TRTQ…SATV) and 825-835 (CCSQPGTQPAQ). 3 stretches are compositionally biased toward low complexity: residues 864–880 (QRRS…HQST), 903–921 (PNSG…GSRG), and 941–953 (SGVS…RSSP). Composition is skewed to polar residues over residues 1223-1238 (LVTQ…SNQR) and 1285-1299 (ASSN…TVQE). A 1-1; approximate repeat occupies 1292-1307 (LAENTVQEEVQLEETK). The tract at residues 1292–1342 (LAENTVQEEVQLEETKEGTEGEGLQEEAVQLEETKTEEGLQEEGVQLEETK) is 3 X 16 AA approximate tandem repeats of T-E-E-G-L-Q-E-E-G-V-Q-L-E-E-T-K. One copy of the 1-2; approximate repeat lies at 1310-1326 (TEGEGLQEEAVQLEETK). The 1-3 repeat unit spans residues 1327–1342 (TEEGLQEEGVQLEETK). A compositionally biased stretch (acidic residues) spans 1346 to 1363 (GEGQQEEEAQLEEIEETG). The segment covering 1434–1445 (RASASAEPCPAE) has biased composition (low complexity). 2 stretches are compositionally biased toward polar residues: residues 1460 to 1472 (TDPS…SGSQ) and 1489 to 1501 (EHTQ…GAAE). A compositionally biased stretch (gly residues) spans 1726-1736 (AEGGLGPGLSQ). Basic and acidic residues-rich tracts occupy residues 1752–1762 (LNRDKDPKLGE) and 1769–1778 (AQEREGKTHN). 3 repeat units span residues 1836–1851 (EAPE…SEGV), 1852–1867 (EAPE…EGEA), and 1875–1890 (EAPE…SEDV). Acidic residues-rich tracts occupy residues 1836-1909 (EAPE…AEAP) and 1920-1948 (ESVE…EAAQ). Residues 1836 to 2244 (EAPEAEGEAQ…GEAQPESEGE (409 aa)) are 25 X 16 AA approximate tandem repeats of [ED]-[AT]-[PQ]-[ED]-[AVT]-E-[GKE]-[ED]-[AMT]-Q-[EPK]-[EAT]-[TSELP]-[EG]-[EGSQDI]-[AVIE]. A 2-4; approximate repeat occupies 1891-1906 (ETPEAEWEVQPESEGA). One copy of the 2-5 repeat lies at 1907-1921 (EAPEAEKEAQPETES). A 2-6; approximate repeat occupies 1923 to 1938 (EALETEGEDEPESEGA). Positions 1934-2017 (ESEGAEAQEA…EMQEAEEEAQ (84 aa)) form a coiled coil. Residues 1939–1954 (EAQEAEEAAQEAEGQT) form a 2-7 repeat. Over residues 1949–1958 (EAEGQTQPES) the composition is skewed to low complexity. The 2-8; approximate repeat unit spans residues 1955 to 1970 (QPESEVIESQEAEEEA). 4 stretches are compositionally biased toward acidic residues: residues 1959-2022 (EVIE…ESDG), 2048-2075 (AQPE…QEAE), 2083-2108 (EDVD…EAEG), and 2117-2245 (EAPE…EGET). The 2-9; approximate repeat unit spans residues 1971 to 1984 (QPESEDVEALEVEV). 2 repeat units span residues 1985-2000 (ETQE…SEDV) and 2001-2016 (EAPE…EEEA). The 2-12; approximate repeat unit spans residues 2017 to 2031 (QPESDGVEAQPKSEG). Residues 2033–2048 (EAQEVEGETQKTEGDA) form a 2-13d repeat. Positions 2054-2081 (GVEAPEAEEEAQEAEGEVQEAEGEAHPE) form a coiled coil. One copy of the 2-14 repeat lies at 2056 to 2071 (EAPEAEEEAQEAEGEV). Residues 2072–2085 (QEAEGEAHPESEDV) form a 2-15; approximate repeat. 10 repeat units span residues 2086–2101 (DAQE…SEGV), 2102–2116 (EAPE…AEGI), 2117–2132 (EAPE…SEGI), 2133–2148 (EAPE…SEGV), 2149–2164 (EAQD…SEGI), 2165–2180 (EAQE…LEGV), 2181–2196 (EAPE…SEGI), 2197–2212 (EAPE…LEGV), 2213–2228 (EAPE…PEGV), and 2229–2244 (ETPE…SEGE). Residues 2292–2308 (PGSQTGPSSSRASSWGN) show a composition bias toward polar residues. Basic and acidic residues predominate over residues 2312–2327 (KDSENDHVLGDTRSPD).

As to quaternary structure, interacts with RP1; has a synergistic effect with RP1 in photoreceptor differentiation. As to expression, retinal-specific; expressed in photoreceptor.

The protein localises to the cytoplasm. Its subcellular location is the cytoskeleton. It localises to the cilium axoneme. It is found in the cell projection. The protein resides in the cilium. The protein localises to the photoreceptor outer segment. Functionally, required for the differentiation of photoreceptor cells. Plays a role in the organization of outer segment of rod and cone photoreceptors. The chain is Retinitis pigmentosa 1-like 1 protein (RP1L1) from Homo sapiens (Human).